We begin with the raw amino-acid sequence, 379 residues long: uncharacterized protein (379 aa).

Residues 7–27 (VYIFAGIFLFIALIILIKIFF) form a helical membrane-spanning segment.

Its subcellular location is the membrane. This is an uncharacterized protein from Caenorhabditis elegans.